An 863-amino-acid polypeptide reads, in one-letter code: Cilia- and flagella-associated protein 58 (863 aa).

Coiled-coil stretches lie at residues 107-600 (TVKE…NERD) and 631-815 (QSQY…KQVF). The tract at residues 836 to 863 (GPSLLDQLPGGSGTGSGGMATGGGVGMS) is disordered. Over residues 845–863 (GGSGTGSGGMATGGGVGMS) the composition is skewed to gly residues.

It belongs to the CFAP58 family.

The protein resides in the cell projection. It localises to the cilium. The protein localises to the flagellum. The polypeptide is Cilia- and flagella-associated protein 58 (Chlamydomonas reinhardtii (Chlamydomonas smithii)).